Reading from the N-terminus, the 236-residue chain is Small ribosomal subunit protein uS3 (236 aa).

One can recognise a KH type-2 domain in the interval 39–107; it reads IREILHKELK…DVVINIVEIR (69 aa). A disordered region spans residues 213-236; sequence MAQDKRMNEGGGESPSPRSRRDAA.

The protein belongs to the universal ribosomal protein uS3 family. As to quaternary structure, part of the 30S ribosomal subunit. Forms a tight complex with proteins S10 and S14.

Its function is as follows. Binds the lower part of the 30S subunit head. Binds mRNA in the 70S ribosome, positioning it for translation. This is Small ribosomal subunit protein uS3 from Bradyrhizobium sp. (strain ORS 278).